The sequence spans 359 residues: Peptide chain release factor 1 (359 aa).

The residue at position 236 (Gln236) is an N5-methylglutamine.

It belongs to the prokaryotic/mitochondrial release factor family. Post-translationally, methylated by PrmC. Methylation increases the termination efficiency of RF1.

Its subcellular location is the cytoplasm. Functionally, peptide chain release factor 1 directs the termination of translation in response to the peptide chain termination codons UAG and UAA. The sequence is that of Peptide chain release factor 1 from Streptococcus pyogenes serotype M12 (strain MGAS2096).